A 349-amino-acid chain; its full sequence is Phosphoribosylformylglycinamidine cyclo-ligase (349 aa).

Belongs to the AIR synthase family.

It is found in the cytoplasm. The catalysed reaction is 2-formamido-N(1)-(5-O-phospho-beta-D-ribosyl)acetamidine + ATP = 5-amino-1-(5-phospho-beta-D-ribosyl)imidazole + ADP + phosphate + H(+). The protein operates within purine metabolism; IMP biosynthesis via de novo pathway; 5-amino-1-(5-phospho-D-ribosyl)imidazole from N(2)-formyl-N(1)-(5-phospho-D-ribosyl)glycinamide: step 2/2. This is Phosphoribosylformylglycinamidine cyclo-ligase from Lawsonia intracellularis (strain PHE/MN1-00).